The following is a 273-amino-acid chain: WIMGHMVNAIAQIDEFVNLGANSIETDVSFDSSANPEYTYHGVPCDCGRTCTKWEHFNEFLKGLRKATTPGDSKYHEKLVLVVFDLKTDSLYDNQASDAGKKLAKSLLQNYWNNGNNGGRAYIVLSIPNLAHYKLITGFKEALTSEGHPELMDKVGYDFSGNDDIGDVANAYKKAGVTGHVWQSDGITNCLLRGLDRVRKAVANRDSSSGYINKVYYWTVDKRQSTRDALDAGVDGIMTNYPDVIADVLNESAYKAKFRIASYDDNPWETFKN.

H5 is a catalytic residue. Residues E25 and D27 each coordinate Mg(2+). Catalysis depends on H41, which acts as the Nucleophile. Disulfide bonds link C45-C51 and C47-C190. D85 serves as a coordination point for Mg(2+). The N-linked (GlcNAc...) asparagine glycan is linked to N250.

The protein belongs to the arthropod phospholipase D family. Class II subfamily. Mg(2+) serves as cofactor. In terms of tissue distribution, expressed by the venom gland.

The protein resides in the secreted. It catalyses the reaction an N-(acyl)-sphingosylphosphocholine = an N-(acyl)-sphingosyl-1,3-cyclic phosphate + choline. It carries out the reaction an N-(acyl)-sphingosylphosphoethanolamine = an N-(acyl)-sphingosyl-1,3-cyclic phosphate + ethanolamine. The catalysed reaction is a 1-acyl-sn-glycero-3-phosphocholine = a 1-acyl-sn-glycero-2,3-cyclic phosphate + choline. The enzyme catalyses a 1-acyl-sn-glycero-3-phosphoethanolamine = a 1-acyl-sn-glycero-2,3-cyclic phosphate + ethanolamine. In terms of biological role, dermonecrotic toxins cleave the phosphodiester linkage between the phosphate and headgroup of certain phospholipids (sphingolipid and lysolipid substrates), forming an alcohol (often choline) and a cyclic phosphate. This toxin acts on sphingomyelin (SM). It may also act on ceramide phosphoethanolamine (CPE), lysophosphatidylcholine (LPC) and lysophosphatidylethanolamine (LPE), but not on lysophosphatidylserine (LPS), and lysophosphatidylglycerol (LPG). It acts by transphosphatidylation, releasing exclusively cyclic phosphate products as second products. Induces dermonecrosis, hemolysis, increased vascular permeability, edema, inflammatory response, and platelet aggregation. This chain is Dermonecrotic toxin LapSicTox-alphaIB1aiii, found in Loxosceles apachea (Apache recluse spider).